A 445-amino-acid polypeptide reads, in one-letter code: MSRKYFGTDGIRGRVGEFPITPDFVLKLGWAVGMAFRRQGNCRVLIGKDTRSSGYMFESAFEAGLSASGADTLLLGPMPTPGIAYLTRTFHAEAGVVISASHNPHDDNGIKFFSGQGTKLPDDVELMIEELLDAPMTVVESARLGKVSRINDAAGRYIEFCKSSVPTSTDFNGLKVVLDCANGATYKIAPNVFRELGAEVTVLAASPNGLNINDKCGSTHLDGLQAAVIEHHADLGIAFDGDGDRVMMVDHTGAIVDGDELLFLIARDMQESGRLQGGVVGTLMSNLGLELALQDLHIPFVRAKVGDRYVMAELLARNWMLGGENSGHIVCCQNTTTGDAIIAALQVLMALKRRGQTLAEARQGIRKCPQVLINVRFKGESDPLEHPSVKEASARVTEQMGGRGRVLLRKSGTEPLVRVMVEGDEEATVRAHAEQLAKIVSEVCA.

Serine 101 acts as the Phosphoserine intermediate in catalysis. Residues serine 101, aspartate 240, aspartate 242, and aspartate 244 each coordinate Mg(2+). At serine 101 the chain carries Phosphoserine.

It belongs to the phosphohexose mutase family. Mg(2+) serves as cofactor. In terms of processing, activated by phosphorylation.

It carries out the reaction alpha-D-glucosamine 1-phosphate = D-glucosamine 6-phosphate. Its function is as follows. Catalyzes the conversion of glucosamine-6-phosphate to glucosamine-1-phosphate. This Pseudomonas paraeruginosa (strain DSM 24068 / PA7) (Pseudomonas aeruginosa (strain PA7)) protein is Phosphoglucosamine mutase.